Consider the following 473-residue polypeptide: Aspartyl/glutamyl-tRNA(Asn/Gln) amidotransferase subunit B (473 aa).

It belongs to the GatB/GatE family. GatB subfamily. Heterotrimer of A, B and C subunits.

It carries out the reaction L-glutamyl-tRNA(Gln) + L-glutamine + ATP + H2O = L-glutaminyl-tRNA(Gln) + L-glutamate + ADP + phosphate + H(+). The catalysed reaction is L-aspartyl-tRNA(Asn) + L-glutamine + ATP + H2O = L-asparaginyl-tRNA(Asn) + L-glutamate + ADP + phosphate + 2 H(+). Allows the formation of correctly charged Asn-tRNA(Asn) or Gln-tRNA(Gln) through the transamidation of misacylated Asp-tRNA(Asn) or Glu-tRNA(Gln) in organisms which lack either or both of asparaginyl-tRNA or glutaminyl-tRNA synthetases. The reaction takes place in the presence of glutamine and ATP through an activated phospho-Asp-tRNA(Asn) or phospho-Glu-tRNA(Gln). The protein is Aspartyl/glutamyl-tRNA(Asn/Gln) amidotransferase subunit B of Methanococcoides burtonii (strain DSM 6242 / NBRC 107633 / OCM 468 / ACE-M).